Reading from the N-terminus, the 411-residue chain is Transforming growth factor beta regulator 1 (411 aa).

2 disordered regions span residues 1–29 (MSLL…PKKS) and 119–146 (GPIS…KGKE). Residue Ser-2 is modified to N-acetylserine. At Ser-10 the chain carries Phosphoserine. Residues 182–241 (VFPIGLGGLTVYSLGEIITDRPGFHDESAIYPVGYCSTRIYASMKCPDQKCLYTCQIKDG) form the FYR N-terminal domain. The FYR C-terminal domain maps to 242-321 (GVQPQFEIVP…RKCINYQWVK (80 aa)).

This sequence belongs to the TBRG1 family. In terms of assembly, interacts with CDKN2A and MDM2. Ubiquitinated; mediated by MDM2 and leading to its subsequent proteasomal degradation. Widely expressed at low levels in most tissues, with highest levels in pancreas, lung and liver. Expression is decreased in primary tumors including lung, liver, breast, pancreas and kidney carcinomas, chronic lymphocytic leukemia and diffuse large B-cell lymphoma.

The protein localises to the nucleus. Its function is as follows. Acts as a growth inhibitor. Can activate p53/TP53, causes G1 arrest and collaborates with CDKN2A to restrict proliferation, but does not require either protein to inhibit DNA synthesis. Redistributes CDKN2A into the nucleoplasm. Involved in maintaining chromosomal stability. The polypeptide is Transforming growth factor beta regulator 1 (TBRG1) (Homo sapiens (Human)).